Here is a 947-residue protein sequence, read N- to C-terminus: Bifunctional glutamine synthetase adenylyltransferase/adenylyl-removing enzyme (947 aa).

The segment at 1–440 (MTPLSSPLSQ…VFNELIGDDE (440 aa)) is adenylyl removase. The interval 450–947 (SEPWRDVWQD…ASWRKWLVAV (498 aa)) is adenylyl transferase.

Belongs to the GlnE family. Mg(2+) is required as a cofactor.

It catalyses the reaction [glutamine synthetase]-O(4)-(5'-adenylyl)-L-tyrosine + phosphate = [glutamine synthetase]-L-tyrosine + ADP. The catalysed reaction is [glutamine synthetase]-L-tyrosine + ATP = [glutamine synthetase]-O(4)-(5'-adenylyl)-L-tyrosine + diphosphate. Involved in the regulation of glutamine synthetase GlnA, a key enzyme in the process to assimilate ammonia. When cellular nitrogen levels are high, the C-terminal adenylyl transferase (AT) inactivates GlnA by covalent transfer of an adenylyl group from ATP to specific tyrosine residue of GlnA, thus reducing its activity. Conversely, when nitrogen levels are low, the N-terminal adenylyl removase (AR) activates GlnA by removing the adenylyl group by phosphorolysis, increasing its activity. The regulatory region of GlnE binds the signal transduction protein PII (GlnB) which indicates the nitrogen status of the cell. The sequence is that of Bifunctional glutamine synthetase adenylyltransferase/adenylyl-removing enzyme from Salmonella dublin (strain CT_02021853).